The following is a 1475-amino-acid chain: Amylopullulanase (1475 aa).

Residues 1–31 form the signal peptide; sequence MFKRRALGFLLAFLLVFTAVFGSMPMEFAKA. Ca(2+) is bound by residues Asp245, Asn247, Asp285, Asp340, Asn398, Asp400, Asn403, Asp404, Gly449, and Asp451. Substrate-binding residues include His524 and Arg627. Asp629 (nucleophile) is an active-site residue. Catalysis depends on Glu658, which acts as the Proton donor. Residues 734 to 735, Asp794, and Arg798 each bind substrate; that span reads HD. Fibronectin type-III domains follow at residues 928-1019 and 1164-1257; these read APQP…PAFP and TPTA…TPDI. Residues 1255–1362 enclose the CBM20 domain; that stretch reads PDIIPIKVTF…VNDTVQRWRD (108 aa).

It belongs to the glycosyl hydrolase 13 family. Requires Ca(2+) as cofactor.

It carries out the reaction Endohydrolysis of (1-&gt;4)-alpha-D-glucosidic linkages in polysaccharides containing three or more (1-&gt;4)-alpha-linked D-glucose units.. The catalysed reaction is Hydrolysis of (1-&gt;6)-alpha-D-glucosidic linkages in pullulan, amylopectin and glycogen, and in the alpha- and beta-limit dextrins of amylopectin and glycogen.. The polypeptide is Amylopullulanase (apu) (Thermoanaerobacter thermohydrosulfuricus (Clostridium thermohydrosulfuricum)).